Here is a 439-residue protein sequence, read N- to C-terminus: Dihydroorotase (439 aa).

Positions 73 and 75 each coordinate Zn(2+). Substrate-binding positions include 75-77 (HLR) and N107. Positions 165, 192, and 245 each coordinate Zn(2+). Residue N291 coordinates substrate. D318 lines the Zn(2+) pocket. D318 is a catalytic residue. H322 serves as a coordination point for substrate.

It belongs to the metallo-dependent hydrolases superfamily. DHOase family. Class I DHOase subfamily. It depends on Zn(2+) as a cofactor.

The enzyme catalyses (S)-dihydroorotate + H2O = N-carbamoyl-L-aspartate + H(+). It participates in pyrimidine metabolism; UMP biosynthesis via de novo pathway; (S)-dihydroorotate from bicarbonate: step 3/3. In terms of biological role, catalyzes the reversible cyclization of carbamoyl aspartate to dihydroorotate. This is Dihydroorotase from Syntrophobacter fumaroxidans (strain DSM 10017 / MPOB).